Here is a 382-residue protein sequence, read N- to C-terminus: Lipid-A-disaccharide synthase (382 aa).

Belongs to the LpxB family.

The catalysed reaction is 2-N,3-O-bis[(3R)-3-hydroxytetradecanoyl]-alpha-D-glucosaminyl 1-phosphate + UDP-2-N,3-O-bis[(3R)-3-hydroxytetradecanoyl]-alpha-D-glucosamine = lipid A disaccharide (E. coli) + UDP + H(+). It carries out the reaction a lipid X + a UDP-2-N,3-O-bis[(3R)-3-hydroxyacyl]-alpha-D-glucosamine = a lipid A disaccharide + UDP + H(+). It functions in the pathway glycolipid biosynthesis; lipid IV(A) biosynthesis; lipid IV(A) from (3R)-3-hydroxytetradecanoyl-[acyl-carrier-protein] and UDP-N-acetyl-alpha-D-glucosamine: step 5/6. Its function is as follows. Condensation of UDP-2,3-diacylglucosamine and 2,3-diacylglucosamine-1-phosphate to form lipid A disaccharide, a precursor of lipid A, a phosphorylated glycolipid that anchors the lipopolysaccharide to the outer membrane of the cell. The chain is Lipid-A-disaccharide synthase from Sodalis glossinidius (strain morsitans).